Consider the following 302-residue polypeptide: Bifunctional protein FolD (302 aa).

Residues 165 to 167 (GRS), Ser190, and Ile231 each bind NADP(+).

Belongs to the tetrahydrofolate dehydrogenase/cyclohydrolase family. In terms of assembly, homodimer.

The enzyme catalyses (6R)-5,10-methylene-5,6,7,8-tetrahydrofolate + NADP(+) = (6R)-5,10-methenyltetrahydrofolate + NADPH. It carries out the reaction (6R)-5,10-methenyltetrahydrofolate + H2O = (6R)-10-formyltetrahydrofolate + H(+). The protein operates within one-carbon metabolism; tetrahydrofolate interconversion. Functionally, catalyzes the oxidation of 5,10-methylenetetrahydrofolate to 5,10-methenyltetrahydrofolate and then the hydrolysis of 5,10-methenyltetrahydrofolate to 10-formyltetrahydrofolate. This Prochlorococcus marinus (strain MIT 9211) protein is Bifunctional protein FolD.